The sequence spans 510 residues: Chromosomal replication initiator protein DnaA (510 aa).

Positions 1–74 (MHTDLWERGC…EATLSELAGK (74 aa)) are domain I, interacts with DnaA modulators. Residues 74 to 173 (KPVRLELSLL…PTLSPAVSRG (100 aa)) form a domain II region. The interval 125-168 (ARHDPQSVVPTPGGSANGRAAPRVGEPGGPVGTSTLPVAPTLSP) is disordered. Residues 174 to 390 (RLNPALTFDT…GALRKVLAYS (217 aa)) form a domain III, AAA+ region region. ATP is bound by residues Gly218, Gly220, Lys221, and Thr222. Residues 391–510 (RFSHKEISIN…LHVLEQTLKG (120 aa)) form a domain IV, binds dsDNA region.

The protein belongs to the DnaA family. As to quaternary structure, oligomerizes as a right-handed, spiral filament on DNA at oriC.

It localises to the cytoplasm. Functionally, plays an essential role in the initiation and regulation of chromosomal replication. ATP-DnaA binds to the origin of replication (oriC) to initiate formation of the DNA replication initiation complex once per cell cycle. Binds the DnaA box (a 9 base pair repeat at the origin) and separates the double-stranded (ds)DNA. Forms a right-handed helical filament on oriC DNA; dsDNA binds to the exterior of the filament while single-stranded (ss)DNA is stabiized in the filament's interior. The ATP-DnaA-oriC complex binds and stabilizes one strand of the AT-rich DNA unwinding element (DUE), permitting loading of DNA polymerase. After initiation quickly degrades to an ADP-DnaA complex that is not apt for DNA replication. Binds acidic phospholipids. The sequence is that of Chromosomal replication initiator protein DnaA from Leptothrix cholodnii (strain ATCC 51168 / LMG 8142 / SP-6) (Leptothrix discophora (strain SP-6)).